A 372-amino-acid chain; its full sequence is Putative glutamate--cysteine ligase 2 (372 aa).

This sequence belongs to the glutamate--cysteine ligase type 2 family. YbdK subfamily. As to quaternary structure, homodimer.

The enzyme catalyses L-cysteine + L-glutamate + ATP = gamma-L-glutamyl-L-cysteine + ADP + phosphate + H(+). ATP-dependent carboxylate-amine ligase which exhibits weak glutamate--cysteine ligase activity. In Escherichia coli O127:H6 (strain E2348/69 / EPEC), this protein is Putative glutamate--cysteine ligase 2 (ybdK).